Here is a 401-residue protein sequence, read N- to C-terminus: Adenosine 3'-phospho 5'-phosphosulfate transporter 2 (401 aa).

2 N-linked (GlcNAc...) asparagine glycosylation sites follow: asparagine 12 and asparagine 71. 6 consecutive transmembrane segments (helical) span residues 78–98, 111–131, 147–167, 170–190, 200–220, and 223–243; these read LTQF…YGYL, YGWY…LIEL, MIIA…LGYL, PTQV…GVFI, VSAA…DSTI, and NFNL…AVIG. An N-linked (GlcNAc...) asparagine glycan is attached at asparagine 254. 4 consecutive transmembrane segments (helical) span residues 267–287, 298–317, 324–346, and 349–369; these read IGFV…PAVT, GYAF…VLAL, LIAV…IFFA, and FTFQ…LNVY.

The protein belongs to the nucleotide-sugar transporter family. SLC35B subfamily.

The protein resides in the golgi apparatus membrane. It carries out the reaction 3'-phosphoadenylyl sulfate(in) + adenosine 3',5'-bisphosphate(out) = 3'-phosphoadenylyl sulfate(out) + adenosine 3',5'-bisphosphate(in). Functionally, probably functions as a 3'-phosphoadenylyl sulfate:adenosine 3',5'-bisphosphate antiporter at the Golgi membranes. Mediates the transport from the cytosol into the lumen of the Golgi of 3'-phosphoadenylyl sulfate/adenosine 3'-phospho 5'-phosphosulfate (PAPS), a universal sulfuryl donor for sulfation events that take place in that compartment. In Pongo abelii (Sumatran orangutan), this protein is Adenosine 3'-phospho 5'-phosphosulfate transporter 2.